The chain runs to 33 residues: Protamine (33 aa).

Residues 1 to 33 (MPRRRRSSSRPVRRRRRPRVSRRRRRRGGRRRR) are disordered.

Testis.

Its subcellular location is the nucleus. It is found in the chromosome. In terms of biological role, protamines substitute for histones in the chromatin of sperm during the haploid phase of spermatogenesis. They compact sperm DNA into a highly condensed, stable and inactive complex. In Oncorhynchus keta (Chum salmon), this protein is Protamine.